The following is a 326-amino-acid chain: Thioredoxin reductase (326 aa).

40–47 (TGNNKGGQ) contacts FAD. Cys141 and Cys144 form a disulfide bridge. 291 to 300 (DVIDHVYKQA) contacts FAD.

This sequence belongs to the class-II pyridine nucleotide-disulfide oxidoreductase family. As to quaternary structure, homodimer. The cofactor is FAD.

Its subcellular location is the cytoplasm. The enzyme catalyses [thioredoxin]-dithiol + NADP(+) = [thioredoxin]-disulfide + NADPH + H(+). This Buchnera aphidicola subsp. Baizongia pistaciae (strain Bp) protein is Thioredoxin reductase (trxB).